Here is a 207-residue protein sequence, read N- to C-terminus: MSRYRGPRLRIIRRLRNLPGLTNKLIESKKNQASGSDQSNQKKVSQYCIRLEAKQRLRFNYGLTERQLLNYVRIARCAKGSTGQILLQLLEMRLDNILFRLGVVPTIPSARQLINHRHILVNNRIVDIPSFHCKPKDIITIGAPKTYQSIITKRIESFAKDQIPDHLTLSLSEPKKPKGFVNYLINRESIGLKINELLVVEYYSRKA.

The S4 RNA-binding domain occupies 92-156 (MRLDNILFRL…YQSIITKRIE (65 aa)).

This sequence belongs to the universal ribosomal protein uS4 family. In terms of assembly, part of the 30S ribosomal subunit. Contacts protein S5. The interaction surface between S4 and S5 is involved in control of translational fidelity.

It is found in the plastid. The protein localises to the chloroplast. In terms of biological role, one of the primary rRNA binding proteins, it binds directly to 16S rRNA where it nucleates assembly of the body of the 30S subunit. Functionally, with S5 and S12 plays an important role in translational accuracy. This is Small ribosomal subunit protein uS4c (rps4) from Equisetum palustre (Marsh horsetail).